Here is a 248-residue protein sequence, read N- to C-terminus: Probable transcriptional regulatory protein Smed_2641 (248 aa).

This sequence belongs to the TACO1 family.

It is found in the cytoplasm. The chain is Probable transcriptional regulatory protein Smed_2641 from Sinorhizobium medicae (strain WSM419) (Ensifer medicae).